Consider the following 24-residue polypeptide: Cryptonin (24 aa).

Its function is as follows. Antimicrobial peptide, active against the Gram-negative bacterium E.coli K12-594 (MIC=3.12 ug/ml), the Gram-positive bacteria B.subtilis KCTC 3086 (MIC=3.12 ug/ml), S.aureus KCTC 1928 (MIC=25 ug/ml) and M.luteus KCTC 3063 (MIC=1.56 ug/ml), the antibiotic resistant bacteria methicillin-resistant S.aureus (MRSA) (MIC=25 ug/ml) and vancomycin-resistant Enterococci (VRE) (MIC=25 ug/ml), and the fungi C.albicans KCTC 7965 (MIC=50 ug/ml) and C.tropicalis KCTC 1925 (MIC=3.12 ug/ml). Has very low hemolytic activity on rat erythrocytes. In Cryptotympana dubia (Korean horse cicada), this protein is Cryptonin.